The sequence spans 116 residues: Large ribosomal subunit protein bL19 (116 aa).

This sequence belongs to the bacterial ribosomal protein bL19 family.

Its function is as follows. This protein is located at the 30S-50S ribosomal subunit interface and may play a role in the structure and function of the aminoacyl-tRNA binding site. This Shewanella loihica (strain ATCC BAA-1088 / PV-4) protein is Large ribosomal subunit protein bL19.